A 180-amino-acid chain; its full sequence is Putative 3-methyladenine DNA glycosylase (180 aa).

Belongs to the DNA glycosylase MPG family.

This is Putative 3-methyladenine DNA glycosylase from Ehrlichia chaffeensis (strain ATCC CRL-10679 / Arkansas).